An 88-amino-acid polypeptide reads, in one-letter code: Small ribosomal subunit protein bS20 (88 aa).

A disordered region spans residues 1-36 (MANTSSAKKATRKIARRTAVNKSRRTQMRGSVRTVE).

This sequence belongs to the bacterial ribosomal protein bS20 family.

Binds directly to 16S ribosomal RNA. This Rhodopseudomonas palustris (strain HaA2) protein is Small ribosomal subunit protein bS20.